Reading from the N-terminus, the 142-residue chain is Putative pre-16S rRNA nuclease (142 aa).

Belongs to the YqgF nuclease family.

The protein localises to the cytoplasm. Could be a nuclease involved in processing of the 5'-end of pre-16S rRNA. This chain is Putative pre-16S rRNA nuclease, found in Lawsonia intracellularis (strain PHE/MN1-00).